Consider the following 429-residue polypeptide: Probable proton-coupled zinc antiporter SLC30A4 (429 aa).

Residues 1–113 lie on the Cytoplasmic side of the membrane; it reads MAGSGAWKRL…LLKQRKVKTR (113 aa). Residues 114-134 traverse the membrane as a helical segment; sequence LTIAAVLYLLFMIGELVGGYI. Residues 135–143 lie on the Lumenal side of the membrane; it reads ANSLAIMTD. Residues 144–164 form a helical membrane-spanning segment; sequence ALHMLTDLSAIILTLLALWLS. His-146 and Asp-150 together coordinate Zn(2+). The Cytoplasmic portion of the chain corresponds to 165–178; it reads SKSPTKRFTFGFHR. A helical transmembrane segment spans residues 179-199; that stretch reads LEVLSAMISVLLVYILMGFLL. The Lumenal segment spans residues 200-216; sequence YEAVQRTIHMKYEINGD. The helical transmembrane segment at 217-237 threads the bilayer; that stretch reads IMLITAAIGVAVNVIMGFLLN. Topologically, residues 238 to 274 are cytoplasmic; sequence QSGHHHAHSHSLPSNSPTTGPRCGHNQGQDSLAVRAA. The segment at 240–264 is zinc binding; that stretch reads GHHHAHSHSLPSNSPTTGPRCGHNQ. Residues 275–295 traverse the membrane as a helical segment; the sequence is FVHALGDLVQSVGVLIAAYII. Zn(2+) is bound by residues His-277 and Asp-281. Topologically, residues 296-310 are lumenal; the sequence is RFKPEYRIADPICTY. A helical membrane pass occupies residues 311-331; sequence VFSLLVAFTTFRIIWDTVVII. At 332–429 the chain is on the cytoplasmic side; it reads LEGVPSHLNV…TCANCQSSSS (98 aa).

This sequence belongs to the cation diffusion facilitator (CDF) transporter (TC 2.A.4) family. SLC30A subfamily. Homodimerization could regulate efficiency for zinc transport. Interacts with TMEM163.

The protein localises to the endosome membrane. It localises to the late endosome membrane. The protein resides in the lysosome membrane. It carries out the reaction Zn(2+)(in) + 2 H(+)(out) = Zn(2+)(out) + 2 H(+)(in). In terms of biological role, probable proton-coupled zinc ion antiporter mediating zinc import from cytoplasm potentially into the endocytic compartment. Controls zinc deposition in milk. This chain is Probable proton-coupled zinc antiporter SLC30A4, found in Bos taurus (Bovine).